The chain runs to 1832 residues: Putative transcription factor capicua (1832 aa).

Phosphoserine occurs at positions 41 and 49. Disordered regions lie at residues 66-121 (ANQS…EVGS), 135-227 (STVG…AHPH), 323-353 (QQQQ…NHNN), 389-427 (NQRQ…AAMR), 444-493 (DGAA…IRRP), 563-619 (DRRK…GGQG), 690-739 (RERV…SGGE), 784-845 (QPTG…VSAP), 874-938 (PMHH…EDDE), 1069-1105 (TSTL…TISC), 1151-1178 (GQDE…EQVT), 1457-1602 (DGGM…STAA), 1632-1668 (QPED…VQKL), 1701-1733 (LESS…HRKV), and 1789-1817 (ASCT…SSTS). Residues 96–121 (NANNNSSNNNTSSSNNNNNSNWEVGS) are compositionally biased toward low complexity. Residues 172–186 (PPPPPPASLPAPSAP) show a composition bias toward pro residues. Low complexity-rich tracts occupy residues 187 to 203 (PTSG…HATS), 211 to 223 (QQQH…HQQQ), and 323 to 342 (QQQQ…QQQQ). A compositionally biased stretch (acidic residues) spans 397–408 (EEPDDQLDDDVF). Residues 409-422 (ETTTPGISANSKKQ) are compositionally biased toward polar residues. The span at 446-484 (AAGAPATSAAKRRSQSLSALQQQQQQQQQAGAAGTAAGQ) shows a compositional bias: low complexity. Positions 490-558 (IRRPMNAFMI…AHFKLHPEWK (69 aa)) form a DNA-binding region, HMG box. The span at 610–619 (GGSGSCGGQG) shows a compositional bias: gly residues. An interaction with gro region spans residues 834–1832 (GSASGGGVVS…TSAADVFQYY (999 aa)). Residues 903-914 (ESSEKDKPALDD) are compositionally biased toward basic and acidic residues. Residues 915–938 (QERDEVEEEDEDEEDDDEDDEDDE) are compositionally biased toward acidic residues. Over residues 1078–1091 (NPANNEAPNKFSNF) the composition is skewed to polar residues. A compositionally biased stretch (low complexity) spans 1092–1105 (PTQHQPTTTTTISC). Low complexity predominate over residues 1462 to 1471 (GCASAAASGG). Positions 1503 to 1525 (LSQSKSESNVSFGANLGASNGQH) are enriched in polar residues. The span at 1547–1589 (NSSNLSSALPTPTSSTTTPNSDEQLPLTPTTSSSNSNLNQQQP) shows a compositional bias: low complexity. T1716 is modified (phosphothreonine). Residues 1724 to 1733 (DASEKGHRKV) show a composition bias toward basic and acidic residues. Polar residues predominate over residues 1789–1799 (ASCTPHSAGPN). Over residues 1800–1817 (TPSDSNSSSTTLSASSTS) the composition is skewed to low complexity.

In terms of assembly, interacts with gro. As to expression, expressed in the central region of embryos. Also expressed in ovarian follicle cells, the wing imaginal disks and the wing pouch.

It is found in the nucleus. Its function is as follows. Transcriptional repressor required for the specification of numerous cell types during embryonic development. Required for terminal patterning of early embryos. May associate with gro to repress tll and hkb, restricting their expression to embryonic terminal poles where they initiate correct development of head and tail structures. Required for dorsoventral patterning of oocytes and early embryos. Cooperates with dl to repress zen and other dorsal specific genes within the embryo and promotes expression of the ventralizing factor pip in ovarian follicle cells. Required during wing development for the specification of intervein areas, where it mediates localized repression of vein specific genes such as aos, dpp and vvl. The polypeptide is Putative transcription factor capicua (cic) (Drosophila melanogaster (Fruit fly)).